Here is a 973-residue protein sequence, read N- to C-terminus: MRWGCHLPRTSWGSGLGRTVPLPDELRIQSSWPFKGVHHPLRPPRAFIRHHGNSADSAPPPGRHGQLFRSISATEAIQRHRRNLTEWFSRLPREERQFGPTFALDTVHVDPVIRESTPDDLLRPSTELATGHQRTQAELPPLALSQLFDPDACGRRVQTVVLYGTVGTGKSTLVRKMVLDWCYGRLPAFELLIPFSCEDLSSLGSTPASLCQLVTQRYTPLKEVLPLMNAAGSRLLFVLHGLERLNLDFRLAGTGLCSDPEEPGAPAAIMVNLLRKYMLPEASILVTTRPSAIGRIPSKYVGRYGEICGFSDTNLQKLYFQLRLNQPDCGYGAGGTGVSVTPAQRDNLIQMLSRNLEGHHQIAAACFLPSYCWLVCATLHFLHAPTSAGQTLTSIYTSFLRLNFNGETLDSTDPSNLSLMSYAARTMGKLAYEGVSSRKTYFSEEDVRGCLEAGIKTEEEFQLLQIFRRDALRFFLAPCVEPGHLGTFVFTVPAMQEYLAALYIVLGLRKTALQRVGKEVFEFVGRVGEDVSLVLGIVAKLLPLRILPLLFNLLKVVPRVFGRMVSKSREAVAQAMVLEMFREEDYYNDDVLDQMGASILGVEGPRRHPDEPPEDEVFELFPMFMSGLLSAHNRAVLAQLGCPIKNLDALENAQAIKKKLGKMGRQVLPPSELLDHLFFHYEFQNQRFSAEVLGSLRQLNLAGVRMTPLKCTVVASVLGSGRHPLDEVNLASCQLDPAGLHTLMPVLLRARKLGLQLNNLGPEACRDLRDLLLHDQCQITTLRLSNNPLTAAGVGVLMDGLAGNTSVTHLSLLHTDLGDEGLELLAAQLDRNKQLQELNVAYNGAGDTVALALAKAARKHPSLELLHLYFNELSSEGRQVLRDLGGSGEGGARVVASLTEGTAVSEYWSVILSEVQRNLNSWDPVRVQRHLKLLLRDLEDSRGATLNPWRKAQLLRVESEVKTLLEQLGGSGH.

A mitochondrion-targeting transit peptide spans Met-1–Leu-84. The segment at Ala-73–Leu-554 is required for interaction with MAVS. One can recognise an NACHT domain in the interval Gln-158–Glu-481. Residue Gly-164–Ser-171 participates in ATP binding. Residues Leu-554–Gly-972 form a required for the repression of MAVS-induced interferon signaling region. The LRRNT domain occupies Arg-665–Val-692. LRR repeat units follow at residues Leu-693 to Ser-716, Arg-722 to Pro-745, Leu-747 to Asp-775, Gln-776 to Asp-799, His-809 to Asn-832, Lys-833 to Lys-855, Ala-856 to Ser-875, and Glu-876 to Ser-897. In terms of domain architecture, LRRCT spans Val-904–Leu-968.

This sequence belongs to the NLRP family. As to quaternary structure, homohexamer. Interacts with MAVS. Interacts with TUFM.

The protein resides in the mitochondrion outer membrane. Functionally, participates in antiviral signaling. Acts as a negative regulator of MAVS-mediated antiviral responses, through the inhibition of the virus-induced RLH (RIG-like helicase)-MAVS interaction. Instead, promotes autophagy by interacting with TUFM and subsequently recruiting the autophagy-related proteins ATG5 and ATG12. Also regulates MAVS-dependent NLRP3 inflammasome activation to attenuate apoptosis. Has no inhibitory function on NF-kappa-B signaling pathway, but enhances NF-kappa-B and JUN N-terminal kinase dependent signaling through the production of reactive oxygen species. Regulates viral mediated-inflammation and energy metabolism in a sex-dependent manner. In females, prevents uncontrolled inflammation and energy metabolism and thus, may contribute to the sex differences observed in infectious and inflammatory diseases. The sequence is that of NLR family member X1 (Nlrx1) from Rattus norvegicus (Rat).